A 1405-amino-acid chain; its full sequence is DNA-directed RNA polymerase subunit beta' (1405 aa).

Zn(2+) contacts are provided by Cys-70, Cys-72, Cys-85, and Cys-88. Mg(2+)-binding residues include Asp-460, Asp-462, and Asp-464. 4 residues coordinate Zn(2+): Cys-815, Cys-890, Cys-897, and Cys-900.

This sequence belongs to the RNA polymerase beta' chain family. The RNAP catalytic core consists of 2 alpha, 1 beta, 1 beta' and 1 omega subunit. When a sigma factor is associated with the core the holoenzyme is formed, which can initiate transcription. Requires Mg(2+) as cofactor. Zn(2+) serves as cofactor.

It catalyses the reaction RNA(n) + a ribonucleoside 5'-triphosphate = RNA(n+1) + diphosphate. DNA-dependent RNA polymerase catalyzes the transcription of DNA into RNA using the four ribonucleoside triphosphates as substrates. This chain is DNA-directed RNA polymerase subunit beta', found in Xanthomonas campestris pv. campestris (strain 8004).